Reading from the N-terminus, the 181-residue chain is CD160 antigen (181 aa).

Positions 1-24 (MLLEPGRGCCALAILLAIVDIQSG) are cleaved as a signal peptide. In terms of domain architecture, Ig-like V-type spans 25–133 (GCINITSSAS…QGHFFSILFT (109 aa)). Residue N28 is glycosylated (N-linked (GlcNAc...) asparagine). Cystine bridges form between C44-C112 and C61-C68. Residue N137 is glycosylated (N-linked (GlcNAc...) asparagine). S159 is lipidated: GPI-anchor amidated serine. Residues 160 to 181 (SGFLQEKVWVMLVTSLVALQAL) constitute a propeptide, removed in mature form.

As to quaternary structure, homomultimer; disulfide-linked. Interacts with HLA-G. Interacts with HLA-A2-B2M in complex with an HIV-derived peptide. Interacts with TNFRSF14 (via cysteine-rich domain 1); this interaction is direct. Interacts with LCK and CD247/CD3 zeta chain. In terms of tissue distribution, expression is restricted to functional NK and cytotoxic T lymphocytes. Expressed in viral-specific effector memory and terminally differentiated effector memory CD8+ T cells. Expressed in memory and activated CD4+ T cell subsets (at protein level). Expressed at high levels in intraepithelial lymphocytes (at protein level). Expressed in both alpha-beta and gamma-delta CD8+ T cell subsets (at protein level). Expressed in umbilical vein endothelial cells (at protein level). Expressed in monocytes and at lower levels in B cells. Isoform 3: Expressed exclusively in activated NK cells (at protein level).

It localises to the cell membrane. The protein localises to the secreted. Functionally, receptor on immune cells capable to deliver stimulatory or inhibitory signals that regulate cell activation and differentiation. Exists as a GPI-anchored and as a transmembrane form, each likely initiating distinct signaling pathways via phosphoinositol 3-kinase in activated NK cells and via LCK and CD247/CD3 zeta chain in activated T cells. Receptor for both classical and non-classical MHC class I molecules. In the context of acute viral infection, recognizes HLA-C and triggers NK cell cytotoxic activity, likely playing a role in anti-viral innate immune response. On CD8+ T cells, binds HLA-A2-B2M in complex with a viral peptide and provides a costimulatory signal to activated/memory T cells. Upon persistent antigen stimulation, such as occurs during chronic viral infection, may progressively inhibit TCR signaling in memory CD8+ T cells, contributing to T cell exhaustion. On endothelial cells, recognizes HLA-G and controls angiogenesis in immune privileged sites. Receptor or ligand for TNF superfamily member TNFRSF14, participating in bidirectional cell-cell contact signaling between antigen presenting cells and lymphocytes. Upon ligation of TNFRSF14, provides stimulatory signal to NK cells enhancing IFNG production and anti-tumor immune response. On activated CD4+ T cells, interacts with TNFRSF14 and down-regulates CD28 costimulatory signaling, restricting memory and alloantigen-specific immune response. In the context of bacterial infection, acts as a ligand for TNFRSF14 on epithelial cells, triggering the production of antimicrobial proteins and pro-inflammatory cytokines. In terms of biological role, the soluble GPI-cleaved form, usually released by activated lymphocytes, might play an immune regulatory role by limiting lymphocyte effector functions. The protein is CD160 antigen of Homo sapiens (Human).